Reading from the N-terminus, the 449-residue chain is Glucose-6-phosphate isomerase (449 aa).

The active-site Proton donor is Glu-291. Active-site residues include His-312 and Lys-426.

Belongs to the GPI family.

It localises to the cytoplasm. The enzyme catalyses alpha-D-glucose 6-phosphate = beta-D-fructose 6-phosphate. It participates in carbohydrate biosynthesis; gluconeogenesis. It functions in the pathway carbohydrate degradation; glycolysis; D-glyceraldehyde 3-phosphate and glycerone phosphate from D-glucose: step 2/4. Functionally, catalyzes the reversible isomerization of glucose-6-phosphate to fructose-6-phosphate. This chain is Glucose-6-phosphate isomerase, found in Streptococcus agalactiae serotype Ia (strain ATCC 27591 / A909 / CDC SS700).